Reading from the N-terminus, the 453-residue chain is uncharacterized protein (453 aa).

This is an uncharacterized protein from Caenorhabditis elegans.